The following is a 545-amino-acid chain: Glucose-6-phosphate isomerase (545 aa).

Glu-351 (proton donor) is an active-site residue. Residues His-382 and Lys-510 contribute to the active site.

Belongs to the GPI family.

The protein resides in the cytoplasm. It carries out the reaction alpha-D-glucose 6-phosphate = beta-D-fructose 6-phosphate. It functions in the pathway carbohydrate biosynthesis; gluconeogenesis. The protein operates within carbohydrate degradation; glycolysis; D-glyceraldehyde 3-phosphate and glycerone phosphate from D-glucose: step 2/4. In terms of biological role, catalyzes the reversible isomerization of glucose-6-phosphate to fructose-6-phosphate. The chain is Glucose-6-phosphate isomerase from Shewanella baltica (strain OS223).